The following is a 302-amino-acid chain: MPIDWFTVIAQGINFLLLLWLLKRFLYHPIIDGLDAREKKIAGILADADTCKSQAENLRTEYESKLAHIEQERTQLVGEAKNEAQMASQSLLDNARHNAEQIVKKRVAALRLEMAELKQDVLQQNIHEVYAISRKVLTELADGDLHTKMIDKLVQRLNTLDDDQHAALTRALANSGNQIVVRSAQPLAEAQKKQLLACLQQYLPSFKKDSSQNNSVNAAPSNPAPSIKLSESIVPRLINGIELTMGGWKLAWSTDNYLAELQEDVEAEFIPFTETLLGLPENEGTDNPEANPPHAEAKIPHA.

A helical transmembrane segment spans residues 5-22; it reads WFTVIAQGINFLLLLWLL. Positions 278 to 302 are disordered; the sequence is GLPENEGTDNPEANPPHAEAKIPHA.

It belongs to the ATPase B chain family. As to quaternary structure, F-type ATPases have 2 components, F(1) - the catalytic core - and F(0) - the membrane proton channel. F(1) has five subunits: alpha(3), beta(3), gamma(1), delta(1), epsilon(1). F(0) has three main subunits: a(1), b(2) and c(10-14). The alpha and beta chains form an alternating ring which encloses part of the gamma chain. F(1) is attached to F(0) by a central stalk formed by the gamma and epsilon chains, while a peripheral stalk is formed by the delta and b chains.

The protein localises to the cell inner membrane. Functionally, f(1)F(0) ATP synthase produces ATP from ADP in the presence of a proton or sodium gradient. F-type ATPases consist of two structural domains, F(1) containing the extramembraneous catalytic core and F(0) containing the membrane proton channel, linked together by a central stalk and a peripheral stalk. During catalysis, ATP synthesis in the catalytic domain of F(1) is coupled via a rotary mechanism of the central stalk subunits to proton translocation. Its function is as follows. Component of the F(0) channel, it forms part of the peripheral stalk, linking F(1) to F(0). The chain is ATP synthase subunit b 1 from Pseudoalteromonas atlantica (strain T6c / ATCC BAA-1087).